A 141-amino-acid chain; its full sequence is uncharacterized protein (141 aa).

The helical transmembrane segment at 13–35 threads the bilayer; it reads PVIGVILMVAITVILAAVIASFV.

Its subcellular location is the membrane. This is an uncharacterized protein from Archaeoglobus fulgidus (strain ATCC 49558 / DSM 4304 / JCM 9628 / NBRC 100126 / VC-16).